The primary structure comprises 466 residues: Metaxin-1 (466 aa).

Residues 1 to 19 are compositionally biased toward low complexity; it reads MLLGGPPRSPRSGTSPKGP. Positions 1–133 are disordered; sequence MLLGGPPRSP…AVAGGGPRQG (133 aa). A compositionally biased stretch (polar residues) spans 20–36; sequence WSSTGHVQFGKSPQTWP. Low complexity predominate over residues 90–110; it reads ARGPVPRSSAASRARRSLASP. Residues K187, K190, K227, and K317 each participate in a glycyl lysine isopeptide (Lys-Gly) (interchain with G-Cter in ubiquitin) cross-link. The helical transmembrane segment at 421 to 441 threads the bilayer; sequence ILSVLAGLAAMVGYALLSGIV.

Belongs to the metaxin family. Interacts with MTX2/metaxin-2. Associates with the mitochondrial contact site and cristae organizing system (MICOS) complex, composed of at least MICOS10/MIC10, CHCHD3/MIC19, CHCHD6/MIC25, APOOL/MIC27, IMMT/MIC60, APOO/MIC23/MIC26 and QIL1/MIC13. This complex was also known under the names MINOS or MitOS complex. The MICOS complex associates with mitochondrial outer membrane proteins SAMM50, MTX1 and MTX2 (together described as components of the mitochondrial outer membrane sorting assembly machinery (SAM) complex) and DNAJC11, mitochondrial inner membrane protein TMEM11 and with HSPA9. The MICOS and SAM complexes together with DNAJC11 are part of a large protein complex spanning both membranes termed the mitochondrial intermembrane space bridging (MIB) complex. Interacts with ARMC1. Ubiquitinated by PRKN during mitophagy, leading to its degradation and enhancement of mitophagy. Deubiquitinated by USP30.

It localises to the membrane. The protein localises to the mitochondrion outer membrane. Its function is as follows. Involved in transport of proteins into the mitochondrion. Essential for embryonic development. The sequence is that of Metaxin-1 (MTX1) from Homo sapiens (Human).